A 444-amino-acid chain; its full sequence is Pineal opsin (444 aa).

Positions 1-20 (MDALQESPPSHHSLPSALPS) are disordered. Over 1–46 (MDALQESPPSHHSLPSALPSATGGNGTVATMHNPFERPLEGIAPWN) the chain is Extracellular. The segment covering 7-20 (SPPSHHSLPSALPS) has biased composition (low complexity). The N-linked (GlcNAc...) asparagine glycan is linked to asparagine 25. Residues 47-71 (FTMLAALMGTITALSLGENFAVIVV) form a helical membrane-spanning segment. Topologically, residues 72-83 (TARFRQLRQPLN) are cytoplasmic. The helical transmembrane segment at 84-108 (YVLVNLAAADLLVSAIGGSVSFFTN) threads the bilayer. Topologically, residues 109 to 123 (IKGYFFLGVHACVLE) are extracellular. The cysteines at positions 120 and 197 are disulfide-linked. Residues 124 to 143 (GFAVTYFGVVALWSLALLAF) traverse the membrane as a helical segment. The Cytoplasmic segment spans residues 144 to 162 (ERYFVICRPLGNFRLQSKH). The helical transmembrane segment at 163 to 186 (AVLGLAVVWVFSLACTLPPVLGWS) threads the bilayer. At 187-210 (SYRPSMIGTTCEPNWYSGELHDHT) the chain is on the extracellular side. Residues 211–238 (FILMFFSTCFIFPLAVIFFSYGKLIQKL) form a helical membrane-spanning segment. Over 239–260 (KKASETQRGLESTRRAEQQVTR) the chain is Cytoplasmic. Residues 261–284 (MVVVMILAFLVCWMPYATFSIVVT) traverse the membrane as a helical segment. Topologically, residues 285–292 (ACPTIHLD) are extracellular. A helical membrane pass occupies residues 293–317 (PLLAAVPAFFSKTATVYNPVIYIFM). Lysine 304 bears the N6-(retinylidene)lysine mark. At 318–444 (NKQFRDCFVQ…SESVSKICPV (127 aa)) the chain is on the cytoplasmic side. Cysteine 331 carries S-palmitoyl cysteine lipidation. Disordered stretches follow at residues 341–360 (QTAG…QSPG) and 388–420 (EPTM…QQGT). Positions 409 to 419 (QQQGQQQQQQG) are enriched in low complexity.

Belongs to the G-protein coupled receptor 1 family. Opsin subfamily. Post-translationally, phosphorylated on some or all of the serine and threonine residues present in the C-terminal region. As to expression, pineal gland.

It is found in the membrane. The protein is Pineal opsin of Petromyzon marinus (Sea lamprey).